We begin with the raw amino-acid sequence, 199 residues long: Probable nicotinate-nucleotide adenylyltransferase (199 aa).

This sequence belongs to the NadD family.

The catalysed reaction is nicotinate beta-D-ribonucleotide + ATP + H(+) = deamido-NAD(+) + diphosphate. It participates in cofactor biosynthesis; NAD(+) biosynthesis; deamido-NAD(+) from nicotinate D-ribonucleotide: step 1/1. In terms of biological role, catalyzes the reversible adenylation of nicotinate mononucleotide (NaMN) to nicotinic acid adenine dinucleotide (NaAD). The polypeptide is Probable nicotinate-nucleotide adenylyltransferase (Rhizobium johnstonii (strain DSM 114642 / LMG 32736 / 3841) (Rhizobium leguminosarum bv. viciae)).